Consider the following 415-residue polypeptide: Homoserine O-succinyltransferase (415 aa).

An AB hydrolase-1 domain is found at 69–383 (NAVLVCHALN…PHGHDAFLLD (315 aa)). Ser175 (nucleophile) is an active-site residue. A substrate-binding site is contributed by Arg245. Catalysis depends on residues Asp344 and His377. Asp378 is a binding site for substrate.

This sequence belongs to the AB hydrolase superfamily. MetX family. As to quaternary structure, homodimer.

It is found in the cytoplasm. The catalysed reaction is L-homoserine + succinyl-CoA = O-succinyl-L-homoserine + CoA. It participates in amino-acid biosynthesis; L-methionine biosynthesis via de novo pathway; O-succinyl-L-homoserine from L-homoserine: step 1/1. Functionally, transfers a succinyl group from succinyl-CoA to L-homoserine, forming succinyl-L-homoserine. This Bordetella parapertussis (strain 12822 / ATCC BAA-587 / NCTC 13253) protein is Homoserine O-succinyltransferase.